Here is a 30-residue protein sequence, read N- to C-terminus: NADH-ubiquinone oxidoreductase 18 kDa subunit (30 aa).

In terms of assembly, complex I is composed of about 45 different subunits.

It is found in the mitochondrion inner membrane. The enzyme catalyses a ubiquinone + NADH + 5 H(+)(in) = a ubiquinol + NAD(+) + 4 H(+)(out). Transfer of electrons from NADH to the respiratory chain. The immediate electron acceptor for the enzyme is believed to be ubiquinone. This Solanum tuberosum (Potato) protein is NADH-ubiquinone oxidoreductase 18 kDa subunit.